A 200-amino-acid polypeptide reads, in one-letter code: Small ribosomal subunit protein uS4 (200 aa).

Residues Thr-20–Arg-41 form a disordered region. Residues Ser-92–Lys-152 form the S4 RNA-binding domain.

The protein belongs to the universal ribosomal protein uS4 family. Part of the 30S ribosomal subunit. Contacts protein S5. The interaction surface between S4 and S5 is involved in control of translational fidelity.

Its function is as follows. One of the primary rRNA binding proteins, it binds directly to 16S rRNA where it nucleates assembly of the body of the 30S subunit. Functionally, with S5 and S12 plays an important role in translational accuracy. This is Small ribosomal subunit protein uS4 from Oceanobacillus iheyensis (strain DSM 14371 / CIP 107618 / JCM 11309 / KCTC 3954 / HTE831).